A 540-amino-acid polypeptide reads, in one-letter code: Bifunctional pantoate ligase/cytidylate kinase (540 aa).

Residues 1-280 (MQWLRTVAAL…VGQTRLIDNL (280 aa)) form a pantoate--beta-alanine ligase region. 28–35 (MGSLHEGH) is an ATP binding site. The active-site Proton donor is histidine 35. A (R)-pantoate-binding site is contributed by glutamine 59. Beta-alanine is bound at residue glutamine 59. 150–153 (GQKD) contributes to the ATP binding site. Glutamine 156 contributes to the (R)-pantoate binding site. ATP is bound by residues valine 179 and 187–190 (YSSR). The cytidylate kinase stretch occupies residues 281 to 540 (LLSPEGVDPL…RSGAAHFDII (260 aa)). Residues 288–307 (DPLPQEQQSAVPPSPKRGRR) form a disordered region.

The protein in the N-terminal section; belongs to the pantothenate synthetase family. This sequence in the C-terminal section; belongs to the cytidylate kinase family. Type 1 subfamily.

It localises to the cytoplasm. It carries out the reaction (R)-pantoate + beta-alanine + ATP = (R)-pantothenate + AMP + diphosphate + H(+). The catalysed reaction is CMP + ATP = CDP + ADP. It catalyses the reaction dCMP + ATP = dCDP + ADP. Its pathway is cofactor biosynthesis; (R)-pantothenate biosynthesis; (R)-pantothenate from (R)-pantoate and beta-alanine: step 1/1. Catalyzes the condensation of pantoate with beta-alanine in an ATP-dependent reaction via a pantoyl-adenylate intermediate. Functionally, catalyzes the transfer of a phosphate group from ATP to either CMP or dCMP to form CDP or dCDP and ADP, respectively. This is Bifunctional pantoate ligase/cytidylate kinase from Synechococcus sp. (strain JA-3-3Ab) (Cyanobacteria bacterium Yellowstone A-Prime).